We begin with the raw amino-acid sequence, 271 residues long: ATP-dependent Clp protease proteolytic subunit 6, chloroplastic (271 aa).

The interval 1-30 (MAGLAISPPLGLSFSSRTRNPKPTSFLSHN) is disordered. Residues 1 to 77 (MAGLAISPPL…KAPRFGVIEA (77 aa)) constitute a chloroplast transit peptide. Residues 13–30 (SFSSRTRNPKPTSFLSHN) are compositionally biased toward polar residues. Ser175 functions as the Nucleophile in the catalytic mechanism. The active site involves His200.

The protein belongs to the peptidase S14 family. Component of the chloroplastic Clp protease core complex which consist of at least 16 proteins: CLPP4 (3 copies), CLPP5 (3 copies), CLPR4 (2 copies), ClpP1 (1 copy), CLPP6 (1 copy), CLPR2 (1 copy), CLPT1 (1 copy), CLPT2 (1 copy) and 3 copies of CLPP3 and/or CLPR1 and/or CLPR3. The core complex is organized in two heptameric rings, one containing CLPP3,4,5,6 in a 1:2:3:1 ratio and the other CLPP1 and CLPR1,2,3,4 in a 3:1:1:1:1 ratio. In terms of tissue distribution, mostly expressed in leaves. Also detected in stems, and to a lower extent, in roots (at protein level).

Its subcellular location is the plastid. The protein localises to the chloroplast stroma. The catalysed reaction is Hydrolysis of proteins to small peptides in the presence of ATP and magnesium. alpha-casein is the usual test substrate. In the absence of ATP, only oligopeptides shorter than five residues are hydrolyzed (such as succinyl-Leu-Tyr-|-NHMec, and Leu-Tyr-Leu-|-Tyr-Trp, in which cleavage of the -Tyr-|-Leu- and -Tyr-|-Trp bonds also occurs).. Cleaves peptides in various proteins in a process that requires ATP hydrolysis. Has a chymotrypsin-like activity. Plays a major role in the degradation of misfolded proteins. Essential protein required for chloroplast development and integrity. In Arabidopsis thaliana (Mouse-ear cress), this protein is ATP-dependent Clp protease proteolytic subunit 6, chloroplastic.